The sequence spans 253 residues: Trypsin beta (253 aa).

A signal peptide spans 1-22 (MLKFVILLSAVACALGGTIPEG). A propeptide spans 23-30 (LLPQLDGR) (activation peptide). One can recognise a Peptidase S1 domain in the interval 31-253 (IVGGTATTIS…DLRSWVINNA (223 aa)). Cys-56 and Cys-72 are oxidised to a cystine. Active-site charge relay system residues include His-71 and Asp-116. Disulfide bonds link Cys-180-Cys-197 and Cys-206-Cys-230. Residue Ser-210 is the Charge relay system of the active site.

Belongs to the peptidase S1 family.

Its subcellular location is the secreted. It is found in the extracellular space. It carries out the reaction Preferential cleavage: Arg-|-Xaa, Lys-|-Xaa.. This Drosophila erecta (Fruit fly) protein is Trypsin beta (betaTry).